We begin with the raw amino-acid sequence, 203 residues long: Outer-membrane lipoprotein LolB (203 aa).

A signal peptide spans 1–17 (MNRLFRLLPLASLVLTA). The N-palmitoyl cysteine moiety is linked to residue cysteine 18. Cysteine 18 carries the S-diacylglycerol cysteine lipid modification.

This sequence belongs to the LolB family. In terms of assembly, monomer.

The protein resides in the cell outer membrane. Functionally, plays a critical role in the incorporation of lipoproteins in the outer membrane after they are released by the LolA protein. This chain is Outer-membrane lipoprotein LolB, found in Klebsiella pneumoniae subsp. pneumoniae (strain ATCC 700721 / MGH 78578).